A 175-amino-acid chain; its full sequence is Peptide methionine sulfoxide reductase MsrA (175 aa).

Residue Cys-10 is part of the active site.

The protein belongs to the MsrA Met sulfoxide reductase family.

It carries out the reaction L-methionyl-[protein] + [thioredoxin]-disulfide + H2O = L-methionyl-(S)-S-oxide-[protein] + [thioredoxin]-dithiol. The catalysed reaction is [thioredoxin]-disulfide + L-methionine + H2O = L-methionine (S)-S-oxide + [thioredoxin]-dithiol. Its function is as follows. Has an important function as a repair enzyme for proteins that have been inactivated by oxidation. Catalyzes the reversible oxidation-reduction of methionine sulfoxide in proteins to methionine. The polypeptide is Peptide methionine sulfoxide reductase MsrA (Psychrobacter sp. (strain PRwf-1)).